A 237-amino-acid polypeptide reads, in one-letter code: Phosphoribosylaminoimidazole-succinocarboxamide synthase (237 aa).

The protein belongs to the SAICAR synthetase family.

It carries out the reaction 5-amino-1-(5-phospho-D-ribosyl)imidazole-4-carboxylate + L-aspartate + ATP = (2S)-2-[5-amino-1-(5-phospho-beta-D-ribosyl)imidazole-4-carboxamido]succinate + ADP + phosphate + 2 H(+). Its pathway is purine metabolism; IMP biosynthesis via de novo pathway; 5-amino-1-(5-phospho-D-ribosyl)imidazole-4-carboxamide from 5-amino-1-(5-phospho-D-ribosyl)imidazole-4-carboxylate: step 1/2. This is Phosphoribosylaminoimidazole-succinocarboxamide synthase from Shigella boydii serotype 4 (strain Sb227).